The primary structure comprises 229 residues: NAD(P)H-hydrate epimerase (229 aa).

Residues 10–224 (SREVDQIAIE…DIGIPPALLD (215 aa)) form the YjeF N-terminal domain. Residue 57–61 (NNGGD) coordinates (6S)-NADPHX. K(+) is bound by residues asparagine 58 and aspartate 129. (6S)-NADPHX contacts are provided by residues 133 to 139 (GTGIRGQ) and aspartate 167. Serine 170 contacts K(+).

Belongs to the NnrE/AIBP family. K(+) serves as cofactor.

The catalysed reaction is (6R)-NADHX = (6S)-NADHX. It carries out the reaction (6R)-NADPHX = (6S)-NADPHX. Functionally, catalyzes the epimerization of the S- and R-forms of NAD(P)HX, a damaged form of NAD(P)H that is a result of enzymatic or heat-dependent hydration. This is a prerequisite for the S-specific NAD(P)H-hydrate dehydratase to allow the repair of both epimers of NAD(P)HX. This Rubinisphaera brasiliensis (strain ATCC 49424 / DSM 5305 / JCM 21570 / IAM 15109 / NBRC 103401 / IFAM 1448) (Planctomyces brasiliensis) protein is NAD(P)H-hydrate epimerase.